Consider the following 412-residue polypeptide: Odorant receptor 47b (412 aa).

At 1–74 (MNDSGYQSNL…NLFIMCNVMT (74 aa)) the chain is on the cytoplasmic side. A helical membrane pass occupies residues 75-95 (IFWTMFVALPESKNVIEMGDD). The Extracellular portion of the chain corresponds to 96–103 (LVWISGMA). The helical transmembrane segment at 104-124 (LVFTKIFYMHLRCDEIDELIS) threads the bilayer. Topologically, residues 125-169 (DFEYYNRELRPHNIDEEVLGWQRLCYVIESGLYINCFCLVNFFSA) are cytoplasmic. Residues 170–190 (AIFLQPLLGEGKLPFHSVYPF) traverse the membrane as a helical segment. Topologically, residues 191 to 229 (QWHRLDLHPYTFWFLYIWQSLTSQHNLMSILMVDMVGIS) are extracellular. A helical transmembrane segment spans residues 230–250 (TFLQTALNLKLLCIEIRKLGD). Topologically, residues 251 to 302 (MEVSDKRFHEEFCRVVRFHQHIIKLVGKANRAFNGAFNAQLMASFSLISIST) are cytoplasmic. A helical transmembrane segment spans residues 303–323 (FETMAAAAVDPKMAAKFVLLM). Residues 324–330 (LVAFIQL) are Extracellular-facing. A helical membrane pass occupies residues 331-351 (SLWCVSGTLVYTQSVEVAQAA). Over 352 to 389 (FDINDWHTKSPGIQRDISFVILRAQKPLMYVAEPFLPF) the chain is Cytoplasmic. The helical transmembrane segment at 390–410 (TLGTYMLVLKNCYRLLALMQE) threads the bilayer. The Extracellular portion of the chain corresponds to 411–412 (SM).

It belongs to the insect chemoreceptor superfamily. Heteromeric odorant receptor channel (TC 1.A.69) family. Or49a subfamily. In terms of assembly, interacts with Orco. Complexes exist early in the endomembrane system in olfactory sensory neurons (OSNs), coupling these complexes to the conserved ciliary trafficking pathway. In terms of tissue distribution, expressed in olfactory sensory neurons in the antenna.

It is found in the cell membrane. In terms of biological role, odorant receptor which mediates acceptance or avoidance behavior, depending on its substrates. The odorant receptor repertoire encodes a large collection of odor stimuli that vary widely in identity, intensity, and duration. May form a complex with Orco to form odorant-sensing units, providing sensitive and prolonged odorant signaling and calcium permeability. Plays an important role in sociosexual interactions since its enhances courtship in a pheromone-dependent manner. The chain is Odorant receptor 47b (Or47b) from Drosophila melanogaster (Fruit fly).